Reading from the N-terminus, the 556-residue chain is Urocanate hydratase (556 aa).

Residues 52–53 (GG), glutamine 130, 176–178 (GMG), glutamate 196, arginine 201, 243–244 (NA), 264–268 (QTSAH), 274–275 (YL), and tyrosine 323 contribute to the NAD(+) site. Cysteine 411 is a catalytic residue. Glycine 493 contributes to the NAD(+) binding site.

The protein belongs to the urocanase family. NAD(+) is required as a cofactor.

Its subcellular location is the cytoplasm. The catalysed reaction is 4-imidazolone-5-propanoate = trans-urocanate + H2O. The protein operates within amino-acid degradation; L-histidine degradation into L-glutamate; N-formimidoyl-L-glutamate from L-histidine: step 2/3. Catalyzes the conversion of urocanate to 4-imidazolone-5-propionate. This chain is Urocanate hydratase, found in Rhodospirillum rubrum (strain ATCC 11170 / ATH 1.1.1 / DSM 467 / LMG 4362 / NCIMB 8255 / S1).